Here is a 212-residue protein sequence, read N- to C-terminus: Neuroendocrine protein 7B2 (212 aa).

An N-terminal signal peptide occupies residues 1–26 (MVSRMVSTMLSGLLFWLASGWTPAFA). A disulfide bridge links Cys120 with Cys130. Ser141 and Ser205 each carry phosphoserine. The interval 174–212 (GGERRKRRSVNPYLQGQRLDNVVAKKSVPHFSDEDKDPE) is disordered.

It belongs to the 7B2 family. As to quaternary structure, interacts with PCSK2/PC2 early in the secretory pathway. Dissociation occurs at later stages. Proteolytically cleaved in the Golgi by a furin-like convertase to generate bioactive peptides. Post-translationally, sulfated on tyrosine residues.

Its subcellular location is the secreted. Acts as a molecular chaperone for PCSK2/PC2, preventing its premature activation in the regulated secretory pathway. Binds to inactive PCSK2 in the endoplasmic reticulum and facilitates its transport from there to later compartments of the secretory pathway where it is proteolytically matured and activated. Also required for cleavage of PCSK2 but does not appear to be involved in its folding. Plays a role in regulating pituitary hormone secretion. The C-terminal peptide inhibits PCSK2 in vitro. The chain is Neuroendocrine protein 7B2 (SCG5) from Homo sapiens (Human).